The chain runs to 208 residues: OVARIAN TUMOR DOMAIN-containing deubiquitinating enzyme 2 (208 aa).

Positions 5–127 (IVRRVIPSDN…GLHYDALALS (123 aa)) constitute an OTU domain. Residue D13 is part of the active site. Catalysis depends on C16, which acts as the Nucleophile. Active-site residues include H120 and H201.

Belongs to the peptidase C85 family.

The catalysed reaction is Thiol-dependent hydrolysis of ester, thioester, amide, peptide and isopeptide bonds formed by the C-terminal Gly of ubiquitin (a 76-residue protein attached to proteins as an intracellular targeting signal).. In terms of biological role, hydrolase that can remove conjugated ubiquitin from proteins in vitro and may therefore play an important regulatory role at the level of protein turnover by preventing degradation. Cysteine protease with a preference for 'Lys-63' and 'Lys-48' -linked ubiquitin (UB) tetramers as substrates. The chain is OVARIAN TUMOR DOMAIN-containing deubiquitinating enzyme 2 from Arabidopsis thaliana (Mouse-ear cress).